A 599-amino-acid polypeptide reads, in one-letter code: Retrotransposon Gag-like protein 5 (599 aa).

Disordered stretches follow at residues 77 to 97 (DPTP…CWPP), 116 to 139 (DYTN…ELHS), and 377 to 450 (FPQE…EEDE). Residues 78-90 (PTPEEEEEEEEEV) show a composition bias toward acidic residues. Acidic residues-rich tracts occupy residues 393–432 (DEME…EDKE) and 439–450 (DSDENKYEEEDE).

The polypeptide is Retrotransposon Gag-like protein 5 (Mus musculus (Mouse)).